Consider the following 129-residue polypeptide: Transcription antitermination protein NusB (129 aa).

This sequence belongs to the NusB family.

Its function is as follows. Involved in transcription antitermination. Required for transcription of ribosomal RNA (rRNA) genes. Binds specifically to the boxA antiterminator sequence of the ribosomal RNA (rrn) operons. This Staphylococcus aureus (strain USA300 / TCH1516) protein is Transcription antitermination protein NusB.